The primary structure comprises 393 residues: Zinc finger CCHC domain-containing protein 18 (393 aa).

Disordered stretches follow at residues 281 to 300 (VEPE…RGTA) and 313 to 341 (DDFD…RTRK). 2 stretches are compositionally biased toward polar residues: residues 291–300 (PGASSLRGTA) and 320–331 (PSTSSGSGQRNN). Residues 346–363 (IRCPHCGEEGHAKETCDN) form a CCHC-type zinc finger.

It belongs to the ZCCHC12 family.

The polypeptide is Zinc finger CCHC domain-containing protein 18 (Mus musculus (Mouse)).